The primary structure comprises 234 residues: MNEIQEPIRLVLLRHGQSIWNQDRHFTGWGDIVLSPQGEQEALRAGHLLKQAGFTFDACFCSELQRASDTLAIVQSVMGLNHLSTYRTWRLNERHYGALEGMRPWAAIRKFGIWSTMKSQIRFDAAPPLLMPDDPRAPVNQPRYAAVDRTQLPLAESMQQTLERVRPLWQETILPEIRQGKRLLIVSHQNLLKTLVMQLEGLTGAQIMRLSITTGHPLCYELDHSLVPVKRYYL.

Substrate-binding positions include 14–21 (RHGQSIWN), 27–28 (TG), Arg-66, and 93–96 (ERHY). His-15 (tele-phosphohistidine intermediate) is an active-site residue. Glu-93 (proton donor/acceptor) is an active-site residue.

Belongs to the phosphoglycerate mutase family. BPG-dependent PGAM subfamily. As to quaternary structure, homodimer.

It catalyses the reaction (2R)-2-phosphoglycerate = (2R)-3-phosphoglycerate. The protein operates within carbohydrate degradation; glycolysis; pyruvate from D-glyceraldehyde 3-phosphate: step 3/5. Its function is as follows. Catalyzes the interconversion of 2-phosphoglycerate and 3-phosphoglycerate. The protein is 2,3-bisphosphoglycerate-dependent phosphoglycerate mutase 1 of Nitrosomonas europaea (strain ATCC 19718 / CIP 103999 / KCTC 2705 / NBRC 14298).